A 323-amino-acid polypeptide reads, in one-letter code: ADP-ribose glycohydrolase MACROD1 (323 aa).

Residues Lys-94, Lys-101, and Lys-127 each carry the N6-succinyllysine modification. Lys-136 is covalently cross-linked (Glycyl lysine isopeptide (Lys-Gly) (interchain with G-Cter in SUMO2)). In terms of domain architecture, Macro spans Asp-139–Phe-320. Gly-157–Ile-159 contributes to the substrate binding site. N6-acetyllysine is present on Lys-161. Residues Ala-170–Asn-172, Gly-177–Asp-182, Ile-265–Gly-271, and Phe-304 contribute to the substrate site.

Belongs to the MacroD-type family. MacroD1/2-like subfamily. Interacts with ESR1; Interacts in a manner that is estrogen independent but is enhanced by estrogen. Interacts (via macro domain) with AR.

Its subcellular location is the nucleus. The catalysed reaction is 3''-O-acetyl-ADP-D-ribose + H2O = ADP-D-ribose + acetate + H(+). It catalyses the reaction 2''-O-acetyl-ADP-D-ribose + H2O = ADP-D-ribose + acetate + H(+). The enzyme catalyses 4-O-(ADP-D-ribosyl)-L-aspartyl-[protein] + H2O = L-aspartyl-[protein] + ADP-D-ribose + H(+). It carries out the reaction 5-O-(ADP-D-ribosyl)-L-glutamyl-[protein] + H2O = L-glutamyl-[protein] + ADP-D-ribose + H(+). The catalysed reaction is alpha-NAD(+) + H2O = ADP-D-ribose + nicotinamide + H(+). Subject to competitive inhibition by the product ADP-ribose. Removes ADP-ribose from aspartate and glutamate residues in proteins bearing a single ADP-ribose moiety. Inactive towards proteins bearing poly-ADP-ribose. Deacetylates O-acetyl-ADP ribose, a signaling molecule generated by the deacetylation of acetylated lysine residues in histones and other proteins. Plays a role in estrogen signaling. Binds to androgen receptor (AR) and amplifies the transactivation function of AR in response to androgen. May play an important role in carcinogenesis and/or progression of hormone-dependent cancers by feed-forward mechanism that activates ESR1 transactivation. Could be an ESR1 coactivator, providing a positive feedback regulatory loop for ESR1 signal transduction. Could be involved in invasive growth by down-regulating CDH1 in endometrial cancer cells. Enhances ESR1-mediated transcription activity. The sequence is that of ADP-ribose glycohydrolase MACROD1 from Mus musculus (Mouse).